The primary structure comprises 98 residues: NADH-ubiquinone oxidoreductase chain 4L (98 aa).

3 helical membrane passes run 1-21 (MSIT…GMFT), 29-49 (SLLC…IVSL), and 61-81 (VILL…LVMV).

The protein belongs to the complex I subunit 4L family. In terms of assembly, core subunit of respiratory chain NADH dehydrogenase (Complex I) which is composed of 45 different subunits.

Its subcellular location is the mitochondrion inner membrane. It catalyses the reaction a ubiquinone + NADH + 5 H(+)(in) = a ubiquinol + NAD(+) + 4 H(+)(out). Core subunit of the mitochondrial membrane respiratory chain NADH dehydrogenase (Complex I) which catalyzes electron transfer from NADH through the respiratory chain, using ubiquinone as an electron acceptor. Part of the enzyme membrane arm which is embedded in the lipid bilayer and involved in proton translocation. The polypeptide is NADH-ubiquinone oxidoreductase chain 4L (MT-ND4L) (Ochotona collaris (Collared pika)).